Reading from the N-terminus, the 306-residue chain is tRNA pseudouridine synthase B (306 aa).

Residue aspartate 43 is the Nucleophile of the active site.

Belongs to the pseudouridine synthase TruB family. Type 1 subfamily.

The enzyme catalyses uridine(55) in tRNA = pseudouridine(55) in tRNA. Its function is as follows. Responsible for synthesis of pseudouridine from uracil-55 in the psi GC loop of transfer RNAs. The sequence is that of tRNA pseudouridine synthase B from Lacticaseibacillus casei (strain BL23) (Lactobacillus casei).